The sequence spans 206 residues: Thymidylate kinase (206 aa).

An ATP-binding site is contributed by G7–S14.

The protein belongs to the thymidylate kinase family.

It carries out the reaction dTMP + ATP = dTDP + ADP. In terms of biological role, phosphorylation of dTMP to form dTDP in both de novo and salvage pathways of dTTP synthesis. The protein is Thymidylate kinase (tmk) of Chlamydia pneumoniae (Chlamydophila pneumoniae).